Reading from the N-terminus, the 325-residue chain is Holliday junction branch migration complex subunit RuvB (325 aa).

The tract at residues 1-172 is large ATPase domain (RuvB-L); sequence MENNELLDIT…FGVVFRLEFY (172 aa). ATP contacts are provided by residues Leu-11, Arg-12, Gly-53, Lys-56, Thr-57, Thr-58, 119–121, Arg-162, Tyr-172, and Arg-209; that span reads EDF. Thr-57 lines the Mg(2+) pocket. Residues 173-243 are small ATPAse domain (RuvB-S); the sequence is NSEELKEIVK…IAQEALIAMD (71 aa). A head domain (RuvB-H) region spans residues 246-325; that stretch reads DYGLDDMDRK…LKRKIPERLF (80 aa). 2 residues coordinate DNA: Arg-301 and Arg-306.

It belongs to the RuvB family. In terms of assembly, homohexamer. Forms an RuvA(8)-RuvB(12)-Holliday junction (HJ) complex. HJ DNA is sandwiched between 2 RuvA tetramers; dsDNA enters through RuvA and exits via RuvB. An RuvB hexamer assembles on each DNA strand where it exits the tetramer. Each RuvB hexamer is contacted by two RuvA subunits (via domain III) on 2 adjacent RuvB subunits; this complex drives branch migration. In the full resolvosome a probable DNA-RuvA(4)-RuvB(12)-RuvC(2) complex forms which resolves the HJ.

It is found in the cytoplasm. It catalyses the reaction ATP + H2O = ADP + phosphate + H(+). The RuvA-RuvB-RuvC complex processes Holliday junction (HJ) DNA during genetic recombination and DNA repair, while the RuvA-RuvB complex plays an important role in the rescue of blocked DNA replication forks via replication fork reversal (RFR). RuvA specifically binds to HJ cruciform DNA, conferring on it an open structure. The RuvB hexamer acts as an ATP-dependent pump, pulling dsDNA into and through the RuvAB complex. RuvB forms 2 homohexamers on either side of HJ DNA bound by 1 or 2 RuvA tetramers; 4 subunits per hexamer contact DNA at a time. Coordinated motions by a converter formed by DNA-disengaged RuvB subunits stimulates ATP hydrolysis and nucleotide exchange. Immobilization of the converter enables RuvB to convert the ATP-contained energy into a lever motion, pulling 2 nucleotides of DNA out of the RuvA tetramer per ATP hydrolyzed, thus driving DNA branch migration. The RuvB motors rotate together with the DNA substrate, which together with the progressing nucleotide cycle form the mechanistic basis for DNA recombination by continuous HJ branch migration. Branch migration allows RuvC to scan DNA until it finds its consensus sequence, where it cleaves and resolves cruciform DNA. The chain is Holliday junction branch migration complex subunit RuvB from Thermodesulfovibrio yellowstonii (strain ATCC 51303 / DSM 11347 / YP87).